The sequence spans 169 residues: Flagellar biosynthetic protein FliU (169 aa).

This sequence belongs to the FliB family.

Functionally, required for the secretion of flagellin and expression of motility. This is Flagellar biosynthetic protein FliU (fliU) from Salmonella muenchen.